The chain runs to 489 residues: Glycogen synthase (489 aa).

Arginine 20 provides a ligand contact to ADP-alpha-D-glucose.

This sequence belongs to the glycosyltransferase 1 family. Bacterial/plant glycogen synthase subfamily.

The enzyme catalyses [(1-&gt;4)-alpha-D-glucosyl](n) + ADP-alpha-D-glucose = [(1-&gt;4)-alpha-D-glucosyl](n+1) + ADP + H(+). It participates in glycan biosynthesis; glycogen biosynthesis. Synthesizes alpha-1,4-glucan chains using ADP-glucose. The protein is Glycogen synthase of Pelodictyon phaeoclathratiforme (strain DSM 5477 / BU-1).